A 504-amino-acid chain; its full sequence is MLNRVRSAVAHLVSSSGTSSQRSKSPDLPKAISPPPGALETPKSPGTKSGNEIPAPQKTAETPVSFSRPTFLQLSPGGLRRADDHVGRAVQSPPDTGRRLPWSTGYAEVINAGKSRHNEDQACCEVVYVESRRSITGVSREPSHNQGFSFYYWGLFDGHAGGGAAEMASRLLHRHIREQLKDLVEILQDPLPPPLCLPSTPGTPGVSSPSQLVSPQSWSPQKEVTHDSLVVGAIENAFQLMDEQMARERRGHLVEGGCCALVVVYLLGKMYVANAGDSRAIIVRNGEIIPMSREFTPETERQRLQLLGFLKPELLGSEFTHLEFPRRVQPKELGQRMLYRDQNMTGWAYKKIELEDLRFPLVCGEGKKARVMATIGVTRGLGDHNLKVCSSTLPIKPFLSCFPEVRVYDLTQYEHCPDDVLVLGTDGLWDVTNDSEVAATVDRVLSTYEPNDPSRYTALAQALVLGARGIPRDRGWRLPNNKLGSGDDISVFVIPLGGPGSSYS.

Disordered regions lie at residues 1–102 (MLNR…RLPW) and 194–217 (PLCLPSTPGTPGVSSPSQLVSPQS). The segment covering 14–23 (SSSGTSSQRS) has biased composition (low complexity). Thr-41 carries the post-translational modification Phosphothreonine. The span at 59-73 (TAETPVSFSRPTFLQ) shows a compositional bias: polar residues. Ser-65 and Ser-75 each carry phosphoserine. The PPM-type phosphatase domain maps to 103 to 496 (STGYAEVINA…DDISVFVIPL (394 aa)). Low complexity predominate over residues 197–217 (LPSTPGTPGVSSPSQLVSPQS).

This sequence belongs to the PP2C family. As to quaternary structure, interacts with UBE2I/UBC9.

It catalyses the reaction O-phospho-L-seryl-[protein] + H2O = L-seryl-[protein] + phosphate. The enzyme catalyses O-phospho-L-threonyl-[protein] + H2O = L-threonyl-[protein] + phosphate. The chain is Protein phosphatase 1J (Ppm1j) from Rattus norvegicus (Rat).